Here is a 549-residue protein sequence, read N- to C-terminus: Chaperonin GroEL 5 (549 aa).

ATP contacts are provided by residues 30–33 (TLGP), lysine 51, 87–91 (DGTTT), glycine 415, and aspartate 495.

Belongs to the chaperonin (HSP60) family. As to quaternary structure, forms a cylinder of 14 subunits composed of two heptameric rings stacked back-to-back. Interacts with the co-chaperonin GroES.

The protein resides in the cytoplasm. It carries out the reaction ATP + H2O + a folded polypeptide = ADP + phosphate + an unfolded polypeptide.. In terms of biological role, together with its co-chaperonin GroES, plays an essential role in assisting protein folding. The GroEL-GroES system forms a nano-cage that allows encapsulation of the non-native substrate proteins and provides a physical environment optimized to promote and accelerate protein folding. In Mesorhizobium japonicum (strain LMG 29417 / CECT 9101 / MAFF 303099) (Mesorhizobium loti (strain MAFF 303099)), this protein is Chaperonin GroEL 5.